We begin with the raw amino-acid sequence, 515 residues long: Envelope glycoprotein (515 aa).

The first 33 residues, 1 to 33 (MPKERRSRRRPQPIIRWVSLTLTLLALCQPIQT), serve as a signal peptide directing secretion. Residues 34–435 (WRCSLSLGNQ…LGLTAWVRET (402 aa)) lie on the Extracellular side of the membrane. N-linked (GlcNAc...) asparagine; by host glycosylation is found at asparagine 129 and asparagine 203. A CXXC motif is present at residues 212–215 (CAIC). Intrachain disulfides connect cysteine 212/cysteine 215, cysteine 212/cysteine 392, and cysteine 384/cysteine 391. Residues asparagine 230, asparagine 251, asparagine 256, asparagine 271, and asparagine 287 are each glycosylated (N-linked (GlcNAc...) asparagine; by host). The tract at residues 304 to 324 (VAALTLGLALSVGLTGINVAV) is fusion peptide. Coiled-coil stretches lie at residues 330–376 (QRLT…WLYI) and 388–420 (NEPCCFLRIQNDSIIRLGDLQPLSQRVSTDWQW). N-linked (GlcNAc...) asparagine; by host glycosylation occurs at asparagine 351. Residues 365-381 (AQNRRGLDWLYIRLGFQ) are immunosuppression. A CX6CC motif is present at residues 384–392 (CPTINEPCC). N-linked (GlcNAc...) asparagine; by host glycosylation occurs at asparagine 398. A helical membrane pass occupies residues 436-456 (IHSVLSLFLLALFLLFLAPCL). Residue cysteine 455 is the site of S-palmitoyl cysteine; by host attachment. At 457-515 (IKCLTSRLLKLLRQAPHFPEISFPPKPDSDYQALLPSAPEIYSHLSPTKPDYINLRPCP) the chain is on the cytoplasmic side.

As to quaternary structure, the mature envelope protein (Env) consists of a trimer of SU-TM heterodimers attached by a labile interchain disulfide bond. Specific enzymatic cleavages in vivo yield mature proteins. Envelope glycoproteins are synthesized as an inactive precursor that is N-glycosylated and processed likely by host cell furin or by a furin-like protease in the Golgi to yield the mature SU and TM proteins. The cleavage site between SU and TM requires the minimal sequence [KR]-X-[KR]-R. In terms of processing, the CXXC motif is highly conserved across a broad range of retroviral envelope proteins. It is thought to participate in the formation of a labile disulfide bond possibly with the CX6CC motif present in the transmembrane protein. Isomerization of the intersubunit disulfide bond to an SU intrachain disulfide bond is thought to occur upon receptor recognition in order to allow membrane fusion. Post-translationally, the transmembrane protein is palmitoylated.

The protein localises to the virion membrane. Its subcellular location is the host cell membrane. Its function is as follows. The surface protein (SU) attaches the virus to the host cell by binding to its receptor. This interaction triggers the refolding of the transmembrane protein (TM) and is thought to activate its fusogenic potential by unmasking its fusion peptide. Fusion occurs at the host cell plasma membrane. Functionally, the transmembrane protein (TM) acts as a class I viral fusion protein. Under the current model, the protein has at least 3 conformational states: pre-fusion native state, pre-hairpin intermediate state, and post-fusion hairpin state. During viral and target cell membrane fusion, the coiled coil regions (heptad repeats) assume a trimer-of-hairpins structure, positioning the fusion peptide in close proximity to the C-terminal region of the ectodomain. The formation of this structure appears to drive apposition and subsequent fusion of viral and target cell membranes. Membranes fusion leads to delivery of the nucleocapsid into the cytoplasm. The sequence is that of Envelope glycoprotein (env) from Bovine leukemia virus (isolate Belgium LB59) (BLV).